The chain runs to 431 residues: tRNA(Ile)-lysidine synthase (431 aa).

ATP is bound at residue 20-25; it reads SGGLDS.

It belongs to the tRNA(Ile)-lysidine synthase family.

The protein localises to the cytoplasm. It catalyses the reaction cytidine(34) in tRNA(Ile2) + L-lysine + ATP = lysidine(34) in tRNA(Ile2) + AMP + diphosphate + H(+). In terms of biological role, ligates lysine onto the cytidine present at position 34 of the AUA codon-specific tRNA(Ile) that contains the anticodon CAU, in an ATP-dependent manner. Cytidine is converted to lysidine, thus changing the amino acid specificity of the tRNA from methionine to isoleucine. The chain is tRNA(Ile)-lysidine synthase from Escherichia coli O157:H7.